Here is a 171-residue protein sequence, read N- to C-terminus: MNGRTQNLWFSTFRLVIVYALFFAKLCFGQEECLRGGCYPATGDLLVGRENRITATSTCGLKERTTGVCNNCLHNTKGTNCQLCKDGYYGNALLGTENVCQRCQCPGGSSGNQFSNTCELRDVGKVFCTNCSEGFTGTQCEKCDNGYYGNPLIQGGTCKKCLCNGNINSAS.

The signal sequence occupies residues 1–29; that stretch reads MNGRTQNLWFSTFRLVIVYALFFAKLCFG. Cystine bridges form between cysteine 59–cysteine 69, cysteine 72–cysteine 81, cysteine 84–cysteine 100, cysteine 103–cysteine 118, and cysteine 105–cysteine 128. Laminin EGF-like domains lie at 66–102, 103–160, and 161–171; these read TGVCNNCLHNTKGTNCQLCKDGYYGNALLGTENVCQR, CQCP…TCKK, and CLCNGNINSAS. Residue asparagine 130 is glycosylated (N-linked (GlcNAc...) asparagine). Disulfide bonds link cysteine 131-cysteine 140 and cysteine 143-cysteine 158.

As to quaternary structure, laminin is a complex glycoprotein, consisting of three different polypeptide chains (alpha, beta, gamma), which are bound to each other by disulfide bonds into a cross-shaped molecule comprising one long and three short arms with globules at each end.

The protein resides in the secreted. It is found in the extracellular space. It localises to the extracellular matrix. The protein localises to the basement membrane. Functionally, binding to cells via a high affinity receptor, laminin is thought to mediate the attachment, migration and organization of cells into tissues during embryonic development by interacting with other extracellular matrix components. The polypeptide is Laminin subunit beta-1 (Hydra vulgaris (Hydra)).